A 431-amino-acid polypeptide reads, in one-letter code: Tryptophan--tRNA ligase (431 aa).

ATP contacts are provided by residues 12 to 14 and 20 to 21; these read TPS and GN. Positions 13–21 match the 'HIGH' region motif; the sequence is PSGTPHLGN. D145 is a binding site for L-tryptophan. ATP-binding positions include 157–159, L197, and 204–208; these read GRD and KMSKS. Residues 204-208 carry the 'KMSKS' region motif; sequence KMSKS.

It belongs to the class-I aminoacyl-tRNA synthetase family. Homodimer.

It is found in the cytoplasm. It catalyses the reaction tRNA(Trp) + L-tryptophan + ATP = L-tryptophyl-tRNA(Trp) + AMP + diphosphate + H(+). Catalyzes the attachment of tryptophan to tRNA(Trp). The protein is Tryptophan--tRNA ligase of Xanthomonas campestris pv. campestris (strain ATCC 33913 / DSM 3586 / NCPPB 528 / LMG 568 / P 25).